The sequence spans 339 residues: Glyceraldehyde-3-phosphate dehydrogenase (339 aa).

Residues 13-14 (RI), D35, and K84 each bind NAD(+). D-glyceraldehyde 3-phosphate is bound by residues 156–158 (SCT), T187, 216–217 (TG), and R239. The active-site Nucleophile is the C157. N321 contributes to the NAD(+) binding site.

Belongs to the glyceraldehyde-3-phosphate dehydrogenase family. Homotetramer.

It localises to the cytoplasm. It catalyses the reaction D-glyceraldehyde 3-phosphate + phosphate + NAD(+) = (2R)-3-phospho-glyceroyl phosphate + NADH + H(+). It participates in carbohydrate degradation; glycolysis; pyruvate from D-glyceraldehyde 3-phosphate: step 1/5. This chain is Glyceraldehyde-3-phosphate dehydrogenase, found in Onchocerca volvulus.